Reading from the N-terminus, the 158-residue chain is SsrA-binding protein (158 aa).

The segment at 131 to 158 (KQLHDKRQTEKERDWNKQKQRILQTNQR) is disordered. Positions 132 to 147 (QLHDKRQTEKERDWNK) are enriched in basic and acidic residues.

It belongs to the SmpB family.

Its subcellular location is the cytoplasm. Functionally, required for rescue of stalled ribosomes mediated by trans-translation. Binds to transfer-messenger RNA (tmRNA), required for stable association of tmRNA with ribosomes. tmRNA and SmpB together mimic tRNA shape, replacing the anticodon stem-loop with SmpB. tmRNA is encoded by the ssrA gene; the 2 termini fold to resemble tRNA(Ala) and it encodes a 'tag peptide', a short internal open reading frame. During trans-translation Ala-aminoacylated tmRNA acts like a tRNA, entering the A-site of stalled ribosomes, displacing the stalled mRNA. The ribosome then switches to translate the ORF on the tmRNA; the nascent peptide is terminated with the 'tag peptide' encoded by the tmRNA and targeted for degradation. The ribosome is freed to recommence translation, which seems to be the essential function of trans-translation. The polypeptide is SsrA-binding protein (Teredinibacter turnerae (strain ATCC 39867 / T7901)).